We begin with the raw amino-acid sequence, 143 residues long: Hemoglobin subunit alpha (143 aa).

At Ser-1 the chain carries N-acetylserine. Residues 1 to 143 (SLSATDKARV…LALALSEKYR (143 aa)) enclose the Globin domain. His-60 is a binding site for O2. His-89 lines the heme b pocket.

The protein belongs to the globin family. In terms of assembly, heterotetramer of two alpha chains and two beta chains. In terms of tissue distribution, red blood cells.

Involved in oxygen transport from gills to the various peripheral tissues. This is Hemoglobin subunit alpha (hba) from Leiostomus xanthurus (Spot).